A 757-amino-acid chain; its full sequence is Chloride anion exchanger (757 aa).

Residues 1 to 71 (MIEAIGNQYV…SWLPAYKIKE (71 aa)) are Cytoplasmic-facing. A helical transmembrane segment spans residues 72-92 (WLLSDIVSGISTGLVAVLQGL). A93 is a topological domain (extracellular). The helical transmembrane segment at 94 to 114 (FALLVNIPPAYGLYAAFFPVI) threads the bilayer. Over 115–124 (TYFFLGTSRH) the chain is Cytoplasmic. A helical membrane pass occupies residues 125-145 (ISVGPFPVLSMMVGVVVTRVV). Over 146–176 (SDPNASSELSSSSTENDSFIEEKVMVAASVT) the chain is Extracellular. N-linked (GlcNAc...) asparagine glycans are attached at residues N149 and N161. The chain crosses the membrane as a helical span at residues 177 to 197 (VLSGIIQLLLGVLQVGFVVIY). At 198–201 (LSES) the chain is on the cytoplasmic side. A helical transmembrane segment spans residues 202–222 (LISGFTTAAAIHVLVSQLKFM). Residues 223-250 (LQLPVPAYSDPFSIFKVLESVFTQIQKT) lie on the Extracellular side of the membrane. The chain crosses the membrane as a helical span at residues 251 to 271 (NIADLVTSVIILVVVFVFKEI). Residues 272–278 (NQRYRSK) are Cytoplasmic-facing. A helical membrane pass occupies residues 279-299 (LPVPIPIELIMTVIATGVSYG). Residues 300-335 (CNFEDRFGVAVVGNMSLGFQPPITPSVEVFQDTIGD) lie on the Extracellular side of the membrane. Residues 336–356 (SFGIAIVGFAVAFSVASVYSL) traverse the membrane as a helical segment. Over 357–367 (KYDYPIDGNQE) the chain is Cytoplasmic. Residues 368–388 (LIALGVSNIFTGAFKGFAGST) traverse the membrane as a helical segment. At 389-404 (ALSRSGVQESTGGKTQ) the chain is on the extracellular side. A helical membrane pass occupies residues 405–425 (VAGLLSAVIVLIVIVAIGFLL). Topologically, residues 426–462 (QPLQKSVLAALALGNLKGMLMQFAEIGRLWKKDKYDC) are cytoplasmic. The chain crosses the membrane as a helical span at residues 463–483 (LIWIMTFIFAIVLGLGLGLAA). At 484–757 (SVAFQLLTIV…ECQVPVETKF (274 aa)) the chain is on the extracellular side. Positions 518–713 (NYAEVYEPEG…LTIHDAILHI (196 aa)) constitute an STAS domain. The PDZ-binding motif lies at 754-757 (ETKF).

This sequence belongs to the SLC26A/SulP transporter (TC 2.A.53) family. Interacts with PDZK1. Interacts with CFTR, SLC26A6 and NHERF1. Interacts (via PDZ-binding motif) with NHERF4 (via the third PDZ domain). This interaction leads to decreased expression of SLC26A3 on the cell membrane resulting in its reduced exchanger activity. N-glycosylation is required for efficient cell surface expression, and protection from proteolytic degradation. In terms of tissue distribution, expressed in spermatogenic cells. Expressed at high levels in cecum and colon and at lower levels in small intestine.

It is found in the apical cell membrane. Its subcellular location is the membrane. The protein resides in the cell membrane. It carries out the reaction hydrogencarbonate(in) + 2 chloride(out) = hydrogencarbonate(out) + 2 chloride(in). Mediates chloride-bicarbonate exchange with a chloride bicarbonate stoichiometry of 2:1 in the intestinal epithelia. Plays a role in the chloride and bicarbonate homeostasis during sperm epididymal maturation and capacitation. The sequence is that of Chloride anion exchanger (Slc26a3) from Mus musculus (Mouse).